The following is a 573-amino-acid chain: Zinc finger protein 10 (573 aa).

Positions Val-14 to Pro-85 constitute a KRAB domain. A C2H2-type 1; atypical zinc finger spans residues Asp-206–His-232. 9 C2H2-type zinc fingers span residues Tyr-265–His-287, Tyr-293–His-315, Tyr-321–His-343, Tyr-349–His-371, Tyr-377–His-399, Tyr-405–His-427, Phe-433–His-455, Tyr-461–His-483, and Tyr-489–His-511. The C2H2-type 11; atypical zinc-finger motif lies at Tyr-517–His-539.

The protein belongs to the krueppel C2H2-type zinc-finger protein family. As to quaternary structure, interacts (via the KRAB domain) with TRIM28 (via the RBCC domain).

It is found in the nucleus. Functionally, may be involved in transcriptional regulation. The chain is Zinc finger protein 10 (ZNF10) from Homo sapiens (Human).